Reading from the N-terminus, the 201-residue chain is Probable nicotinate-nucleotide adenylyltransferase (201 aa).

The protein belongs to the NadD family.

The enzyme catalyses nicotinate beta-D-ribonucleotide + ATP + H(+) = deamido-NAD(+) + diphosphate. The protein operates within cofactor biosynthesis; NAD(+) biosynthesis; deamido-NAD(+) from nicotinate D-ribonucleotide: step 1/1. Catalyzes the reversible adenylation of nicotinate mononucleotide (NaMN) to nicotinic acid adenine dinucleotide (NaAD). The protein is Probable nicotinate-nucleotide adenylyltransferase of Carboxydothermus hydrogenoformans (strain ATCC BAA-161 / DSM 6008 / Z-2901).